We begin with the raw amino-acid sequence, 131 residues long: Profilin-4 (131 aa).

C13 and C115 are joined by a disulfide. Positions 81 to 97 (AVIRGKKGAGGITIKKT) match the Involved in PIP2 interaction motif. At T111 the chain carries Phosphothreonine.

It belongs to the profilin family. Occurs in many kinds of cells as a complex with monomeric actin in a 1:1 ratio. Post-translationally, phosphorylated by MAP kinases.

The protein localises to the cytoplasm. Its subcellular location is the cytoskeleton. Binds to actin and affects the structure of the cytoskeleton. At high concentrations, profilin prevents the polymerization of actin, whereas it enhances it at low concentrations. This chain is Profilin-4, found in Phleum pratense (Common timothy).